The primary structure comprises 424 residues: MSWPTDSELNSIKEAVAQMSGRDKGEVRVVVAPYRICPLGAHIDHQGGTVSAMTINKGILLGFVPSGDTQVQLRSAQFEGEVCFRVDEIQHPIGLANKNGASTPSPSKEKSIWGTYARGAVYALQSSKKNLKQGIIGYLSGSNGLDSSGLSSSAAVGVAYLLALENANELTVSPTENIEYDRLIENGYLGLRNGILDQSAILLSNYGCLTYMDCKTLDHELVQAPELEKPFRILLAFSGLRQALTTNPGYNLRVSECQEAAKVLLTASGNSELEPTLCNVEHAVYEAHKHELKPVLAKRAEHYFSENMRVIKGREAWASGNLEEFGKLISASGLSSIENYECGAEPLIQLYKILLKAPGVYGARFSGAGFRGCCLAFVDAEKAEAAASYVKDEYEKAQPEFANNLNGGKPVLICEAGDAARVLL.

N-acetylserine is present on Ser-2. 146–155 (DSSGLSSSAA) serves as a coordination point for ATP. Residue Asp-197 is the Proton acceptor of the active site.

It belongs to the GHMP kinase family. The cofactor is Mg(2+). It depends on Mn(2+) as a cofactor. Ca(2+) serves as cofactor. As to expression, expressed in roots, stems, leaves, flowers and young siliques. Higher expression in the elongating middle stem region than in the lower or upper stem region.

The enzyme catalyses D-galacturonate + ATP = 1-phospho-alpha-D-galacturonate + ADP + H(+). With respect to regulation, inhibited by EDTA and ADP. Its function is as follows. Sugar-1-kinase with a strict substrate specificity for the alpha-anomeric configuration of D-galacturonic acid (D-GalA) and ATP. Involved in the biosynthesis of UDP-galacturonic acid (UDP-GalA) from the salvaged GalA that is released during growth-dependent cell wall restructuring. This chain is Galacturonokinase (GALAK), found in Arabidopsis thaliana (Mouse-ear cress).